Reading from the N-terminus, the 456-residue chain is Peripherin (456 aa).

The span at 1–14 shows a compositional bias: polar residues; sequence MSHSGLRSTSTSYR. Residues 1 to 55 form a disordered region; sequence MSHSGLRSTSTSYRRTLGSSPVPSSYSSSSRLSTSRHFGSPSPGPSSRSSSSAFR. The tract at residues 1 to 90 is head; sequence MSHSGLRSTS…FLTTRSNEKA (90 aa). Low complexity predominate over residues 16-55; that stretch reads TLGSSPVPSSYSSSSRLSTSRHFGSPSPGPSSRSSSSAFR. The region spanning 88-397 is the IF rod domain; sequence EKAELQELND…KLLEGEESRI (310 aa). Positions 91–123 are coil 1A; it reads ELQELNDRFASFIEKVRYLEQQNAVLVTEINQA. The interval 124–134 is linker 1; that stretch reads RSKEPTRASDL. The segment at 135-230 is coil 1B; it reads CQQELRELRK…KLHEEELNDV (96 aa). The segment at 231-252 is linker 2; it reads QVSVQAQPVHMEIEAAKQPDLT. The interval 253–395 is coil 2; it reads SALRDIRSQY…YRKLLEGEES (143 aa). The tract at residues 396 to 456 is tail; that stretch reads RIAVPIHSLT…RKEQSSEGEK (61 aa). The disordered stretch occupies residues 411–456; the sequence is SPAAPEIDPSTETHTRKTVAIKTIETRDGEQVVTESRKEQSSEGEK. A compositionally biased stretch (basic and acidic residues) spans 434–456; the sequence is IETRDGEQVVTESRKEQSSEGEK.

Belongs to the intermediate filament family. As to quaternary structure, forms homodimers (in vitro). Homopolymerizes into a filamentous network (in vitro).

It is found in the cytoplasm. Its subcellular location is the cytoskeleton. The protein resides in the cell projection. The protein localises to the axon. It localises to the perikaryon. Its function is as follows. Class-III neuronal intermediate filament protein. My form an independent structural network without the involvement of other neurofilaments or may cooperate with other neuronal intermediate filament proteins to form a filamentous network. This is Peripherin (prph) from Xenopus laevis (African clawed frog).